A 442-amino-acid chain; its full sequence is 3-dehydroquinate synthase, chloroplastic (442 aa).

The N-terminal 58 residues, 1 to 58 (MAANTISLSNVAASKNLNSFQSRAFIAPPTIFFPVASAKSKPGELSLSSTTLSRSRVR), are a transit peptide targeting the chloroplast. Position 59 is an N-acetylalanine (A59). NAD(+) is bound by residues N119, 150-152 (DGE), K155, 183-188 (GGVIGD), 208-209 (TT), K221, K230, and 248-251 (TLNT). E263 serves as a coordination point for a divalent metal cation. K305 provides a ligand contact to NAD(+). Residues H326 and H343 each coordinate a divalent metal cation.

This sequence belongs to the sugar phosphate cyclases superfamily. Dehydroquinate synthase family. As to quaternary structure, homodimer. It depends on a divalent metal cation as a cofactor. Requires NAD(+) as cofactor.

The protein resides in the plastid. Its subcellular location is the chloroplast. The catalysed reaction is 7-phospho-2-dehydro-3-deoxy-D-arabino-heptonate = 3-dehydroquinate + phosphate. Its pathway is metabolic intermediate biosynthesis; chorismate biosynthesis; chorismate from D-erythrose 4-phosphate and phosphoenolpyruvate: step 2/7. Catalyzes the second step in the shikimate pathway. This Arabidopsis thaliana (Mouse-ear cress) protein is 3-dehydroquinate synthase, chloroplastic (DHQS).